Consider the following 231-residue polypeptide: Large ribosomal subunit protein uL1 (231 aa).

This sequence belongs to the universal ribosomal protein uL1 family. As to quaternary structure, part of the 50S ribosomal subunit.

Functionally, binds directly to 23S rRNA. The L1 stalk is quite mobile in the ribosome, and is involved in E site tRNA release. In terms of biological role, protein L1 is also a translational repressor protein, it controls the translation of the L11 operon by binding to its mRNA. The sequence is that of Large ribosomal subunit protein uL1 from Azotobacter vinelandii (strain DJ / ATCC BAA-1303).